The chain runs to 256 residues: DNA repair protein RecO (256 aa).

This sequence belongs to the RecO family.

Involved in DNA repair and RecF pathway recombination. In Streptococcus pneumoniae serotype 19F (strain G54), this protein is DNA repair protein RecO.